The primary structure comprises 557 residues: GMP synthase [glutamine-hydrolyzing] (557 aa).

Residues 13-209 (TILTLDFGSQ…AVDICGANPN (197 aa)) form the Glutamine amidotransferase type-1 domain. The Nucleophile role is filled by C89. Residues H183 and E185 contribute to the active site. One can recognise a GMPS ATP-PPase domain in the interval 210–414 (WTMSKFVDQE…LGIAHELVMR (205 aa)). 238-244 (SGGVDST) lines the ATP pocket. Residues R311, D476, K549, and E555 each coordinate XMP.

Homodimer. Mg(2+) is required as a cofactor.

The protein localises to the cytoplasm. The protein resides in the cytosol. It carries out the reaction XMP + L-glutamine + ATP + H2O = GMP + L-glutamate + AMP + diphosphate + 2 H(+). It functions in the pathway purine metabolism; GMP biosynthesis; GMP from XMP (L-Gln route): step 1/1. Inhibited by 6-diazo-5-oxo-l-norleucine (DON) and acivicin (ACI). In terms of biological role, catalyzes the conversion of xanthine monophosphate (XMP) to GMP in the presence of glutamine and ATP through an adenyl-XMP intermediate. In Aspergillus fumigatus (strain ATCC MYA-4609 / CBS 101355 / FGSC A1100 / Af293) (Neosartorya fumigata), this protein is GMP synthase [glutamine-hydrolyzing] (gua1).